A 372-amino-acid chain; its full sequence is Tyrosine--tRNA ligase (372 aa).

Residues tyrosine 37, tyrosine 169, glutamine 173, aspartate 176, and glutamine 191 each coordinate L-tyrosine. The 'KMSKS' region signature appears at 246 to 250 (KMSKS). Lysine 249 is a binding site for ATP.

This sequence belongs to the class-I aminoacyl-tRNA synthetase family. TyrS type 4 subfamily. Homodimer.

Its subcellular location is the cytoplasm. It carries out the reaction tRNA(Tyr) + L-tyrosine + ATP = L-tyrosyl-tRNA(Tyr) + AMP + diphosphate + H(+). Functionally, catalyzes the attachment of tyrosine to tRNA(Tyr) in a two-step reaction: tyrosine is first activated by ATP to form Tyr-AMP and then transferred to the acceptor end of tRNA(Tyr). The polypeptide is Tyrosine--tRNA ligase (Pyrobaculum arsenaticum (strain DSM 13514 / JCM 11321 / PZ6)).